The chain runs to 302 residues: Transmembrane protein 191 (302 aa).

Positions Gln5 to Ser147 form a coiled coil. Residues Leu39–Gly66 form a disordered region. A compositionally biased stretch (basic and acidic residues) spans Arg42 to Leu53. The helical transmembrane segment at Leu242 to Leu262 threads the bilayer.

It belongs to the TMEM191 family.

The protein localises to the membrane. The sequence is that of Transmembrane protein 191 from Mus musculus (Mouse).